A 529-amino-acid chain; its full sequence is uncharacterized protein (529 aa).

A helical membrane pass occupies residues 354-373; that stretch reads FHVASFPWISWAILGSYIML.

The protein resides in the host membrane. This is an uncharacterized protein from Acidianus convivator (ATV).